A 505-amino-acid chain; its full sequence is Pentatricopeptide repeat-containing protein At2g17033 (505 aa).

3 PPR repeats span residues 243 to 277, 278 to 312, and 313 to 347; these read KTQA…KIKP, GLFE…GHKI, and DTVC…NVPF. The region spanning 413 to 503 is the Smr domain; the sequence is LDLHGMHLSS…AKGKTVKEWL (91 aa).

This sequence belongs to the PPR family. P subfamily.

This chain is Pentatricopeptide repeat-containing protein At2g17033, found in Arabidopsis thaliana (Mouse-ear cress).